Here is an 850-residue protein sequence, read N- to C-terminus: Pentatricopeptide repeat-containing protein At5g16860 (850 aa).

PPR repeat units lie at residues 58-88, 91-125, 126-160, 161-191, 192-227, 228-262, 263-293, 294-328, 329-363, 364-398, 406-436, 439-473, 476-510, 512-542, 543-577, 578-608, and 614-644; these read TLNL…FPPS, GVYH…SWTP, DNYT…GFIS, NVFV…MSVW, DVVS…GCRP, DNIT…EMIQ, NMFV…MSVK, DVVS…KIKM, DVVT…GIKP, NEVT…PIDL, ENMV…LSPK, DVVT…DCQT, NAFT…QQNA, PLFV…MMAK, NEVT…GFKL, DGVT…MKTV, and GPEH…MPME. A type E motif region spans residues 649 to 724; sequence VWVAFLSCCR…RPGCSWVEGI (76 aa). Residues 725–755 form a type E(+) motif region; sequence KGTTTFFVGDKTHPHAKEIYQVLLDHMQRIK. The type DYW motif stretch occupies residues 756–850; it reads DIGYVPETGF…NGSCSCKGYW (95 aa).

This sequence belongs to the PPR family. PCMP-H subfamily.

This Arabidopsis thaliana (Mouse-ear cress) protein is Pentatricopeptide repeat-containing protein At5g16860 (PCMP-H92).